Consider the following 98-residue polypeptide: Large ribosomal subunit protein uL23 (98 aa).

This sequence belongs to the universal ribosomal protein uL23 family. As to quaternary structure, part of the 50S ribosomal subunit. Contacts protein L29, and trigger factor when it is bound to the ribosome.

In terms of biological role, one of the early assembly proteins it binds 23S rRNA. One of the proteins that surrounds the polypeptide exit tunnel on the outside of the ribosome. Forms the main docking site for trigger factor binding to the ribosome. The protein is Large ribosomal subunit protein uL23 of Bifidobacterium animalis subsp. lactis (strain AD011).